We begin with the raw amino-acid sequence, 1592 residues long: Probable serine/threonine-protein kinase DDB_G0293958 (1592 aa).

The Protein kinase 1 domain maps to 1–302 (MTGFEIFKKK…CLNYLKEKLI (302 aa)). Residues 2-10 (TGFEIFKKK) and lysine 43 contribute to the ATP site. Aspartate 158 functions as the Proton acceptor in the catalytic mechanism. Disordered regions lie at residues 348–402 (INNN…NNNN), 455–526 (FNDI…SNYN), and 837–867 (KNNN…NDKS). The span at 349 to 402 (NNNNNNNNNNNNNNNNNNNNNNNNNNNNNNNNNNNNNNNNNNNNNNNNNNNNNN) shows a compositional bias: low complexity. Residues 461-518 (STTGEEEEEEKKDNLKRQNENNQIEQEDKGEKHLKETLNNNNNNNNNNNNNNNNNNNN) are a coiled coil. Over residues 486–496 (QEDKGEKHLKE) the composition is skewed to basic and acidic residues. 2 stretches are compositionally biased toward low complexity: residues 499-526 (NNNN…SNYN) and 837-864 (KNNN…NNSN). Positions 1342 to 1592 (LGTYNLIGDS…KELIECLNKL (251 aa)) constitute a Protein kinase 2 domain. ATP contacts are provided by residues 1348-1356 (IGDSVFRNI) and lysine 1376. Aspartate 1474 functions as the Proton acceptor in the catalytic mechanism.

This sequence belongs to the protein kinase superfamily. Ser/Thr protein kinase family.

The enzyme catalyses L-seryl-[protein] + ATP = O-phospho-L-seryl-[protein] + ADP + H(+). The catalysed reaction is L-threonyl-[protein] + ATP = O-phospho-L-threonyl-[protein] + ADP + H(+). This chain is Probable serine/threonine-protein kinase DDB_G0293958, found in Dictyostelium discoideum (Social amoeba).